The primary structure comprises 1404 residues: MKDLLKFLKQQSKTEEFEGIKIGLASPDLIRSWSFGEVKKPETINYRTFKPEREGLFCARIFGPVKDYECLCGKYKRLKHRGVICEKCGVEVTQTKVRRERMGHIDLASPVAHIWFLKSLPSRIGLMLDMTLRDIERVLYFESFVVIEPGMTSLERGQMLTEENYLDALEEYGDEFEAKMGAEAVLELLRAIELEKEIEMMREELPSINSETRRKKITKRLKLIEAFFQSGNKPEWMILKVLPVLPPDLRPLVPLDGGRFATSDLNDLYRRVINRNNRLKRLLDLAAPDIIVRNEKRMLQESVDALLDNGRRGRAITGSNKRPLKSLADMIKGKQGRFRQNLLGKRVDYSGRSVITVGPTLRLHQCGLPKKMALELFKPFIYGKLEGRGLATTIKAAKKMVEREVPEVWDVLDDVIREHPVMLNRAPTLHRLGIQAFEPVLIEGKAIQLHPLVCAAYNADFDGDQMAVHVPLTLEAQLEARSLMMSTNNILSPANGEPVITPSQDVVLGLYYTSRECVNGKGEGMAFESVAEAEKAYRTGAAELHARVKVRITETKTDEAGEKVKTRRIVDTTVGRALLSLILPKGLSFDLVNQNMGKKQISKLLNTCYRQLGLKDTVIFADQLMYTGFHFATVSGASVGINDMVIPDEKYTLVADAEAEVLEIQEQFQSGLVTAGERYNKVIDIWASANEKVSKAMMDNLSSETVINRDGEEEKQESFNSIYMMADSGARGSAAQIRQLAGMRGLMAKPDGSIIETPITANFREGLNVSQYFISTHGARKGLADTALKTANSGYLTRRLVDVAQDLVVIEEDCGTFEGLTMKPLIEGGDVVEPLRERVLGRVVAQDVFKPGTEEVLIPRNTLLDEAWCDTVEDNSIDEMIVRSVISCDTDFGVCAACYGRDLARGHIINQGEAIGVVAAQSIGEPGTQLTMRTFHIGGAASRASAENNVQVKNAGTLKLHNAKHVTNSEGKLVIVSRSSELAIIDELGREKERYKVPYGTVLEKLEDAPVAAGEIIANWDPHTHPIITEVAGSTKFVDMIEGVTMTRQTDELTGLSSIVVLDVAQRPTAGKEMRPMIRLVAADGGDLMIPGTEVPAQYFLPGNAIVNLDDNAPINVGDALARIPQESSKTRDITGGLPRVADLFEARKPKEPAILAEVSGTISFGKETKGKRRLVITPAEGGDHYEEMIPKWRNLNVFEGEKVERGEVIADGPEAAHDILRLRGIHNVANYIVNEVQDVYRLQGVKINDKHIEVIIRQMLRKCEIANAGDSEFLAGEQAEVSRVKIANRELEAQGKQPATFERELLGITKASLATESFISAASFQETTRVLTEAAVGGKSDKLRGLKENVIVGRLIPAGTGYSYHQKRAEAAVKPAAEEAPAISASEAEQNLADLLNLAGSSD.

Zn(2+) is bound by residues cysteine 70, cysteine 72, cysteine 85, and cysteine 88. Aspartate 460, aspartate 462, and aspartate 464 together coordinate Mg(2+). Zn(2+) contacts are provided by cysteine 814, cysteine 888, cysteine 895, and cysteine 898.

Belongs to the RNA polymerase beta' chain family. As to quaternary structure, the RNAP catalytic core consists of 2 alpha, 1 beta, 1 beta' and 1 omega subunit. When a sigma factor is associated with the core the holoenzyme is formed, which can initiate transcription. The cofactor is Mg(2+). It depends on Zn(2+) as a cofactor.

It catalyses the reaction RNA(n) + a ribonucleoside 5'-triphosphate = RNA(n+1) + diphosphate. Functionally, DNA-dependent RNA polymerase catalyzes the transcription of DNA into RNA using the four ribonucleoside triphosphates as substrates. In Shewanella piezotolerans (strain WP3 / JCM 13877), this protein is DNA-directed RNA polymerase subunit beta'.